Here is a 187-residue protein sequence, read N- to C-terminus: MEGVESKEREVMVAKPVAVGVSDLLLRLLAFTVTLVAAIVIAVDKQTKVVPIQLSDSLPPLDVPLTAKWHQMSAIVYFLVTNAIACTYAVLSLLLALVNRGKSKGLWTLIAVLDAFMVALLFSGNGAAAAVGVLGYKGNSHVNWNKVCNVFGKFCDQMAASIGVSLIGSLAFLLLVIIPGVRLHRRN.

Residues 1–22 (MEGVESKEREVMVAKPVAVGVS) lie on the Cytoplasmic side of the membrane. Residues 23–43 (DLLLRLLAFTVTLVAAIVIAV) traverse the membrane as a helical segment. At 44-77 (DKQTKVVPIQLSDSLPPLDVPLTAKWHQMSAIVY) the chain is on the extracellular side. Residues 78 to 98 (FLVTNAIACTYAVLSLLLALV) traverse the membrane as a helical segment. Residues 99–114 (NRGKSKGLWTLIAVLD) are Cytoplasmic-facing. The chain crosses the membrane as a helical span at residues 115–135 (AFMVALLFSGNGAAAAVGVLG). The Extracellular segment spans residues 136-157 (YKGNSHVNWNKVCNVFGKFCDQ). The helical transmembrane segment at 158 to 178 (MAASIGVSLIGSLAFLLLVII) threads the bilayer. Residues 179-187 (PGVRLHRRN) are Cytoplasmic-facing.

The protein belongs to the Casparian strip membrane proteins (CASP) family. Homodimer and heterodimers.

The protein localises to the cell membrane. This Glycine max (Soybean) protein is CASP-like protein 1E2.